We begin with the raw amino-acid sequence, 97 residues long: Mitochondrial import inner membrane translocase subunit Tim8 A (97 aa).

Residues 43–66 (CWEKCMDKPGPKLDSRAEACFVNC) carry the Twin CX3C motif motif. Cystine bridges form between cysteine 43–cysteine 66 and cysteine 47–cysteine 62. A phosphoserine mark is found at serine 57, serine 87, serine 94, and serine 96.

It belongs to the small Tim family. Heterohexamer; composed of 3 copies of TIMM8A and 3 copies of TIMM13, named soluble 70 kDa complex. Associates with the TIM22 complex, whose core is composed of TIMM22.

The protein localises to the mitochondrion inner membrane. Its function is as follows. Mitochondrial intermembrane chaperone that participates in the import and insertion of some multi-pass transmembrane proteins into the mitochondrial inner membrane. Also required for the transfer of beta-barrel precursors from the TOM complex to the sorting and assembly machinery (SAM complex) of the outer membrane. Acts as a chaperone-like protein that protects the hydrophobic precursors from aggregation and guide them through the mitochondrial intermembrane space. The TIMM8-TIMM13 complex mediates the import of proteins such as TIMM23, SLC25A12/ARALAR1 and SLC25A13/ARALAR2, while the predominant TIMM9-TIMM10 70 kDa complex mediates the import of much more proteins. This is Mitochondrial import inner membrane translocase subunit Tim8 A (TIMM8A) from Bos taurus (Bovine).